The following is a 171-amino-acid chain: Large ribosomal subunit protein uL10 (171 aa).

This sequence belongs to the universal ribosomal protein uL10 family. Part of the ribosomal stalk of the 50S ribosomal subunit. The N-terminus interacts with L11 and the large rRNA to form the base of the stalk. The C-terminus forms an elongated spine to which L12 dimers bind in a sequential fashion forming a multimeric L10(L12)X complex.

In terms of biological role, forms part of the ribosomal stalk, playing a central role in the interaction of the ribosome with GTP-bound translation factors. The sequence is that of Large ribosomal subunit protein uL10 from Erythrobacter litoralis (strain HTCC2594).